The primary structure comprises 375 residues: B3 domain-containing protein REM-like 2 (375 aa).

3 consecutive DNA-binding regions (TF-B3) follow at residues 51 to 147 (SFVA…KRLY), 131 to 226 (FVTV…YGTN), and 277 to 375 (RLVI…KSGK).

It localises to the nucleus. This chain is B3 domain-containing protein REM-like 2, found in Arabidopsis thaliana (Mouse-ear cress).